A 468-amino-acid polypeptide reads, in one-letter code: UDP-N-acetylmuramate--L-alanine ligase (468 aa).

121–127 (GSHGKTT) contributes to the ATP binding site.

It belongs to the MurCDEF family.

It is found in the cytoplasm. It catalyses the reaction UDP-N-acetyl-alpha-D-muramate + L-alanine + ATP = UDP-N-acetyl-alpha-D-muramoyl-L-alanine + ADP + phosphate + H(+). The protein operates within cell wall biogenesis; peptidoglycan biosynthesis. Functionally, cell wall formation. The sequence is that of UDP-N-acetylmuramate--L-alanine ligase from Borreliella burgdorferi (strain ATCC 35210 / DSM 4680 / CIP 102532 / B31) (Borrelia burgdorferi).